The following is a 342-amino-acid chain: Anthranilate phosphoribosyltransferase (342 aa).

Residues Gly-90, 93–94 (GS), Thr-98, 100–103 (NIST), 118–126 (KHGNRRATS), and Ser-130 contribute to the 5-phospho-alpha-D-ribose 1-diphosphate site. Gly-90 is a binding site for anthranilate. Position 102 (Ser-102) interacts with Mg(2+). Asn-121 serves as a coordination point for anthranilate. Arg-176 is an anthranilate binding site. Residues Asp-235 and Glu-236 each coordinate Mg(2+).

The protein belongs to the anthranilate phosphoribosyltransferase family. As to quaternary structure, homodimer. Requires Mg(2+) as cofactor.

The catalysed reaction is N-(5-phospho-beta-D-ribosyl)anthranilate + diphosphate = 5-phospho-alpha-D-ribose 1-diphosphate + anthranilate. It participates in amino-acid biosynthesis; L-tryptophan biosynthesis; L-tryptophan from chorismate: step 2/5. Functionally, catalyzes the transfer of the phosphoribosyl group of 5-phosphorylribose-1-pyrophosphate (PRPP) to anthranilate to yield N-(5'-phosphoribosyl)-anthranilate (PRA). In Rhodopirellula baltica (strain DSM 10527 / NCIMB 13988 / SH1), this protein is Anthranilate phosphoribosyltransferase.